A 67-amino-acid chain; its full sequence is MAWKVSVDQDTCIGDAICASLCPDVFEMNDEGKAQPKVEVIEDEELYNCAKEAMEACPVSAITIEEA.

4Fe-4S ferredoxin-type domains lie at 3 to 31 and 36 to 67; these read WKVS…MNDE and PKVE…IEEA. 3 residues coordinate [4Fe-4S] cluster: C12, D15, and C18. A disulfide bridge connects residues C22 and C49. C57 contacts [4Fe-4S] cluster.

As to quaternary structure, homodimer. [4Fe-4S] cluster serves as cofactor. It depends on [3Fe-4S] cluster as a cofactor.

Ferredoxins are iron-sulfur proteins that transfer electrons in a wide variety of metabolic reactions. This chain is Ferredoxin (fdxA), found in Pyrococcus furiosus (strain ATCC 43587 / DSM 3638 / JCM 8422 / Vc1).